The chain runs to 153 residues: Aspartate carbamoyltransferase regulatory chain (153 aa).

4 residues coordinate Zn(2+): Cys-109, Cys-114, Cys-138, and Cys-141.

It belongs to the PyrI family. Contains catalytic and regulatory chains. Requires Zn(2+) as cofactor.

Involved in allosteric regulation of aspartate carbamoyltransferase. The polypeptide is Aspartate carbamoyltransferase regulatory chain (Edwardsiella ictaluri (strain 93-146)).